A 253-amino-acid polypeptide reads, in one-letter code: uncharacterized protein (253 aa).

C2HC LYAR-type zinc fingers lie at residues 1-26 (MVFF…FQCR) and 27-51 (NTTF…VKCI). Residues C6, C9, H21, C25, C32, C35, H47, and C50 each contribute to the Zn(2+) site. Residues 136–171 (AAEADKMREEAIRKQEETQKMEKAQKEAAAAAKKET) are a coiled coil.

It is found in the nucleus. This is an uncharacterized protein from Caenorhabditis elegans.